Reading from the N-terminus, the 231-residue chain is tRNA (guanine-N(1)-)-methyltransferase (231 aa).

S-adenosyl-L-methionine contacts are provided by residues G109 and 133-138 (IGDYVL).

Belongs to the RNA methyltransferase TrmD family. In terms of assembly, homodimer.

It is found in the cytoplasm. The catalysed reaction is guanosine(37) in tRNA + S-adenosyl-L-methionine = N(1)-methylguanosine(37) in tRNA + S-adenosyl-L-homocysteine + H(+). Its function is as follows. Specifically methylates guanosine-37 in various tRNAs. The chain is tRNA (guanine-N(1)-)-methyltransferase from Nocardia farcinica (strain IFM 10152).